The chain runs to 281 residues: Putative pyruvate, phosphate dikinase regulatory protein (281 aa).

ADP is bound at residue 150 to 157 (GVSRTSKT).

This sequence belongs to the pyruvate, phosphate/water dikinase regulatory protein family. PDRP subfamily.

The enzyme catalyses N(tele)-phospho-L-histidyl/L-threonyl-[pyruvate, phosphate dikinase] + ADP = N(tele)-phospho-L-histidyl/O-phospho-L-threonyl-[pyruvate, phosphate dikinase] + AMP + H(+). It catalyses the reaction N(tele)-phospho-L-histidyl/O-phospho-L-threonyl-[pyruvate, phosphate dikinase] + phosphate + H(+) = N(tele)-phospho-L-histidyl/L-threonyl-[pyruvate, phosphate dikinase] + diphosphate. In terms of biological role, bifunctional serine/threonine kinase and phosphorylase involved in the regulation of the pyruvate, phosphate dikinase (PPDK) by catalyzing its phosphorylation/dephosphorylation. This chain is Putative pyruvate, phosphate dikinase regulatory protein, found in Sorangium cellulosum (strain So ce56) (Polyangium cellulosum (strain So ce56)).